Here is a 305-residue protein sequence, read N- to C-terminus: MLMVAALLSWFLVGLFIRASKARGWGQPVRKDGPQTHLVKEGTPTAGGVAFVLAMALVFFPLYLSGHAGGERELLIMLTALAMGVVGGVDDWLKIQSRMRGHGKKELLAREKFPLQFLVALVFAWLAAPLASHELVPSLGPVMDVVLIALVMVGSVNAFNFTDGLDGLLGGVAIIVLLPLLALSPVSALLVAVLLGFLWFNAHPARVFMGDMGSHAIGAVAAGAYILYADVWLLPIAAIIPVVAVLSVMIQVISFKTRGKRIFRMSPIQHHFELSGWPETHVTIRFWVITAVATAAVWWLLGARP.

Helical transmembrane passes span methionine 1–lysine 21, alanine 46–glycine 66, glutamate 73–leucine 93, phenylalanine 113–histidine 133, leucine 139–phenylalanine 159, isoleucine 174–leucine 194, valine 207–leucine 227, leucine 233–isoleucine 253, and valine 282–glycine 302.

This sequence belongs to the glycosyltransferase 4 family. MraY subfamily. It depends on Mg(2+) as a cofactor.

The protein localises to the cell membrane. The catalysed reaction is UDP-N-acetyl-alpha-D-muramoyl-L-alanyl-gamma-D-glutamyl-meso-2,6-diaminopimeloyl-D-alanyl-D-alanine + di-trans,octa-cis-undecaprenyl phosphate = di-trans,octa-cis-undecaprenyl diphospho-N-acetyl-alpha-D-muramoyl-L-alanyl-D-glutamyl-meso-2,6-diaminopimeloyl-D-alanyl-D-alanine + UMP. It functions in the pathway cell wall biogenesis; peptidoglycan biosynthesis. Its function is as follows. Catalyzes the initial step of the lipid cycle reactions in the biosynthesis of the cell wall peptidoglycan: transfers peptidoglycan precursor phospho-MurNAc-pentapeptide from UDP-MurNAc-pentapeptide onto the lipid carrier undecaprenyl phosphate, yielding undecaprenyl-pyrophosphoryl-MurNAc-pentapeptide, known as lipid I. This Deinococcus deserti (strain DSM 17065 / CIP 109153 / LMG 22923 / VCD115) protein is Phospho-N-acetylmuramoyl-pentapeptide-transferase.